Consider the following 470-residue polypeptide: Ribosomal protein uS12 methylthiotransferase RimO (470 aa).

Residues 1-27 form a disordered region; it reads MPCQAPHSDSNVKNPSEATNQKDHSPR. Positions 7–19 are enriched in polar residues; the sequence is HSDSNVKNPSEAT. Positions 26–141 constitute an MTTase N-terminal domain; the sequence is PRVGFVSLGC…VMQAVHTHLP (116 aa). 6 residues coordinate [4Fe-4S] cluster: Cys-35, Cys-71, Cys-100, Cys-172, Cys-176, and Cys-179. The region spanning 158-399 is the Radical SAM core domain; the sequence is LTPKHYAYLK…MEVAEAVSAR (242 aa). The region spanning 402 to 470 is the TRAM domain; the sequence is QRKVGQTLRV…ADGHDLWGEV (69 aa).

The protein belongs to the methylthiotransferase family. RimO subfamily. Requires [4Fe-4S] cluster as cofactor.

It is found in the cytoplasm. It carries out the reaction L-aspartate(89)-[ribosomal protein uS12]-hydrogen + (sulfur carrier)-SH + AH2 + 2 S-adenosyl-L-methionine = 3-methylsulfanyl-L-aspartate(89)-[ribosomal protein uS12]-hydrogen + (sulfur carrier)-H + 5'-deoxyadenosine + L-methionine + A + S-adenosyl-L-homocysteine + 2 H(+). Catalyzes the methylthiolation of an aspartic acid residue of ribosomal protein uS12. The polypeptide is Ribosomal protein uS12 methylthiotransferase RimO (Cupriavidus taiwanensis (strain DSM 17343 / BCRC 17206 / CCUG 44338 / CIP 107171 / LMG 19424 / R1) (Ralstonia taiwanensis (strain LMG 19424))).